We begin with the raw amino-acid sequence, 404 residues long: Immediate early response gene 5-like protein (404 aa).

Disordered stretches follow at residues 86–107 (AADF…EPAA), 160–231 (AALQ…APAS), and 308–327 (QEEE…EPPG). The segment covering 177-194 (PLQPGPAPLPLPLPPPAP) has biased composition (pro residues). Residues 195-231 (AALCPRDPRAPAACSAPPGAAPPAAAASPPASPAPAS) are compositionally biased toward low complexity. The span at 308-318 (QEEEEDDEEDA) shows a compositional bias: acidic residues.

The protein belongs to the IER family.

The polypeptide is Immediate early response gene 5-like protein (IER5L) (Homo sapiens (Human)).